A 282-amino-acid chain; its full sequence is Pantothenate synthetase (282 aa).

Position 26 to 33 (26 to 33 (MGNLHEGH)) interacts with ATP. The active-site Proton donor is the His33. Gln57 provides a ligand contact to (R)-pantoate. Gln57 lines the beta-alanine pocket. Residue 144–147 (GKKD) participates in ATP binding. Residue Gln150 coordinates (R)-pantoate. ATP is bound by residues Val173 and 181 to 184 (LSSR).

It belongs to the pantothenate synthetase family. As to quaternary structure, homodimer.

The protein resides in the cytoplasm. It catalyses the reaction (R)-pantoate + beta-alanine + ATP = (R)-pantothenate + AMP + diphosphate + H(+). It participates in cofactor biosynthesis; (R)-pantothenate biosynthesis; (R)-pantothenate from (R)-pantoate and beta-alanine: step 1/1. Its function is as follows. Catalyzes the condensation of pantoate with beta-alanine in an ATP-dependent reaction via a pantoyl-adenylate intermediate. The sequence is that of Pantothenate synthetase from Cupriavidus taiwanensis (strain DSM 17343 / BCRC 17206 / CCUG 44338 / CIP 107171 / LMG 19424 / R1) (Ralstonia taiwanensis (strain LMG 19424)).